Consider the following 136-residue polypeptide: Flagellar assembly factor FliW 2 (136 aa).

The protein belongs to the FliW family. As to quaternary structure, interacts with translational regulator CsrA and flagellin(s).

The protein localises to the cytoplasm. Functionally, acts as an anti-CsrA protein, binds CsrA and prevents it from repressing translation of its target genes, one of which is flagellin. Binds to flagellin and participates in the assembly of the flagellum. In Wolinella succinogenes (strain ATCC 29543 / DSM 1740 / CCUG 13145 / JCM 31913 / LMG 7466 / NCTC 11488 / FDC 602W) (Vibrio succinogenes), this protein is Flagellar assembly factor FliW 2.